The primary structure comprises 93 residues: WAP four-disulfide core domain protein 13 (93 aa).

An N-terminal signal peptide occupies residues 1–22 (MKPVLPLQFLVVFCLALQLVPG). The WAP; atypical domain occupies 24 to 73 (PKQRVLKYILEPPPCISAPENCTHLCTMQEDCEKGFQCCSSFCGIVCSSE). 3 cysteine pairs are disulfide-bonded: cysteine 45-cysteine 66, cysteine 49-cysteine 61, and cysteine 55-cysteine 70.

It localises to the secreted. Functionally, putative acid-stable proteinase inhibitor. This is WAP four-disulfide core domain protein 13 (WFDC13) from Homo sapiens (Human).